A 100-amino-acid chain; its full sequence is uncharacterized protein (100 aa).

This is an uncharacterized protein from Schizosaccharomyces pombe (strain 972 / ATCC 24843) (Fission yeast).